We begin with the raw amino-acid sequence, 85 residues long: Contulakin-Lt1 (85 aa).

Positions 1–22 (MRTAYWVMVMMMVGITAPLSEG) are cleaved as a signal peptide. A propeptide spanning residues 23–60 (RKLNDAIRGLVADYLTPQLLQSLVSAPYPEFQLDDPNL) is cleaved from the precursor. Residues Cys-65 and Cys-70 are joined by a disulfide bond. Residues 76–85 (RRRDLKKRNK) constitute a propeptide that is removed on maturation.

Belongs to the conotoxin C superfamily. In terms of tissue distribution, expressed by the venom duct.

The protein localises to the secreted. Acts as an agonist of neurotensin receptors. It binds to human neurotensin type 1 receptor (NTSR1), rat neurotensin types 1 and 2 receptors (NTSR1/NTSR2) and mouse neurotensin type 3 receptor (SORT1). In Conus litteratus (Lettered cone), this protein is Contulakin-Lt1.